The chain runs to 157 residues: UPF0254 protein MTH_1148 (157 aa).

It belongs to the UPF0254 family.

The sequence is that of UPF0254 protein MTH_1148 from Methanothermobacter thermautotrophicus (strain ATCC 29096 / DSM 1053 / JCM 10044 / NBRC 100330 / Delta H) (Methanobacterium thermoautotrophicum).